A 262-amino-acid polypeptide reads, in one-letter code: UPF0758 protein R01728 (262 aa).

Positions 23–44 (PEKRTRNSPATAPAPATDTHYH) are disordered. Low complexity predominate over residues 31 to 40 (PATAPAPATD). The 123-residue stretch at 140–262 (VLSSWSAVID…HVSLKGLRLF (123 aa)) folds into the MPN domain. The Zn(2+) site is built by His211, His213, and Asp224. Residues 211-224 (HNHPSGDPTPSRAD) carry the JAMM motif motif.

Belongs to the UPF0758 family.

This chain is UPF0758 protein R01728, found in Rhizobium meliloti (strain 1021) (Ensifer meliloti).